Here is a 237-residue protein sequence, read N- to C-terminus: Homeobox protein Nkx-3.1 (237 aa).

Positions 1–14 are enriched in basic and acidic residues; it reads MLRVAEPREPRVEA. 2 disordered regions span residues 1–96 and 108–130; these read MLRV…EPES and EHNP…RSRA. Polar residues predominate over residues 24-34; it reads PTQSKRLTSFL. Basic and acidic residues-rich tracts occupy residues 38–47 and 57–71; these read ILRDRAERHG and PDPR…DKAG. Positions 125–184 form a DNA-binding region, homeobox; it reads QKRSRAAFSHTQVIELERKFSHQKYLSAPERAHLAKNLKLTETQVKIWFQNRRYKTKRKQ.

This sequence belongs to the NK-3 homeobox family. In terms of assembly, interacts with serum response factor (SRF). Interacts with SPDEF. Interacts with WDR77. Interacts with TOPORS which polyubiquitinates NKX3-1 and induces its proteasomal degradation. Interacts with FEM1B. In terms of processing, ubiquitinated by TOPORS; monoubiquitinated at several residues and also polyubiquitinated on single residues. As to expression, expressed mostly in the male urogenital tract, with highest expression in the epithelial cells lining the ducts of anterior, dorsolateral and ventral prostate and in the bulbourethral gland, and much lower in the seminal vesicle and the testis. Expression in the prostate increases during sexual maturation and is drastically reduced following castration. Expressed also in brain (hippocampus and external granular layer of the cerebral cortex), kidney (intralobular arteries), thymus and adrenal and salivary glands.

The protein localises to the nucleus. Its function is as follows. Transcription factor, which binds preferentially the consensus sequence 5'-TAAGT[AG]-3' and can behave as a transcriptional repressor. Plays an important role in normal prostate development, regulating proliferation of glandular epithelium and in the formation of ducts in prostate. Acts as a tumor suppressor controlling prostate carcinogenesis, as shown by the ability to suppress growth and tumorigenicity of prostate carcinoma cells. Plays a role in the formation of minor salivary glands (particularly palatine and lingual glands). This Mus musculus (Mouse) protein is Homeobox protein Nkx-3.1.